The sequence spans 366 residues: Chorismate synthase (366 aa).

An NADP(+)-binding site is contributed by R47. FMN-binding positions include 124–126 (RSS), G286, 301–305 (KPVAT), and R327.

Belongs to the chorismate synthase family. Homotetramer. FMNH2 is required as a cofactor.

It catalyses the reaction 5-O-(1-carboxyvinyl)-3-phosphoshikimate = chorismate + phosphate. Its pathway is metabolic intermediate biosynthesis; chorismate biosynthesis; chorismate from D-erythrose 4-phosphate and phosphoenolpyruvate: step 7/7. Catalyzes the anti-1,4-elimination of the C-3 phosphate and the C-6 proR hydrogen from 5-enolpyruvylshikimate-3-phosphate (EPSP) to yield chorismate, which is the branch point compound that serves as the starting substrate for the three terminal pathways of aromatic amino acid biosynthesis. This reaction introduces a second double bond into the aromatic ring system. This is Chorismate synthase from Methylacidiphilum infernorum (isolate V4) (Methylokorus infernorum (strain V4)).